The sequence spans 77 residues: Large ribosomal subunit protein uL24 (77 aa).

A disordered region spans residues 42-61 (KKHQKPSQTNANGGVVESEG).

The protein belongs to the universal ribosomal protein uL24 family. In terms of assembly, part of the 50S ribosomal subunit.

Its function is as follows. One of two assembly initiator proteins, it binds directly to the 5'-end of the 23S rRNA, where it nucleates assembly of the 50S subunit. In terms of biological role, one of the proteins that surrounds the polypeptide exit tunnel on the outside of the subunit. This chain is Large ribosomal subunit protein uL24, found in Lactobacillus helveticus (strain DPC 4571).